Reading from the N-terminus, the 373-residue chain is Methionine import ATP-binding protein MetN 1 (373 aa).

The 242-residue stretch at 29–270 (ILIDRVRKVY…PRHEVTRRFV (242 aa)) folds into the ABC transporter domain. Residue 67–74 (GRSGAGKS) coordinates ATP.

The protein belongs to the ABC transporter superfamily. Methionine importer (TC 3.A.1.24) family. As to quaternary structure, the complex is composed of two ATP-binding proteins (MetN), two transmembrane proteins (MetI) and a solute-binding protein (MetQ).

Its subcellular location is the cell inner membrane. The enzyme catalyses L-methionine(out) + ATP + H2O = L-methionine(in) + ADP + phosphate + H(+). It catalyses the reaction D-methionine(out) + ATP + H2O = D-methionine(in) + ADP + phosphate + H(+). Part of the ABC transporter complex MetNIQ involved in methionine import. Responsible for energy coupling to the transport system. This chain is Methionine import ATP-binding protein MetN 1, found in Rhodopseudomonas palustris (strain ATCC BAA-98 / CGA009).